Reading from the N-terminus, the 763-residue chain is DNA polymerase 3 (763 aa).

This sequence belongs to the DNA polymerase type-B family.

The catalysed reaction is DNA(n) + a 2'-deoxyribonucleoside 5'-triphosphate = DNA(n+1) + diphosphate. The sequence is that of DNA polymerase 3 (dpo3) from Saccharolobus shibatae (strain ATCC 51178 / DSM 5389 / JCM 8931 / NBRC 15437 / B12) (Sulfolobus shibatae).